A 366-amino-acid polypeptide reads, in one-letter code: Bacteriochlorophyll a protein (366 aa).

The bacteriochlorophyll a site is built by histidine 110, histidine 145, histidine 290, histidine 297, and histidine 298.

Homotrimer. Each subunit contains 7 molecules of bacteriochlorophyll a.

In terms of biological role, intermediary in the transfer of excitation energy from the chlorophyll to the reaction centers. The sequence is that of Bacteriochlorophyll a protein from Prosthecochloris aestuarii.